Reading from the N-terminus, the 526-residue chain is Probable Xaa-Pro aminopeptidase GLRG_02280 (526 aa).

Asp-285, Asp-296, Glu-454, and Glu-495 together coordinate Mn(2+).

It belongs to the peptidase M24B family. Requires Mn(2+) as cofactor.

It catalyses the reaction Release of any N-terminal amino acid, including proline, that is linked to proline, even from a dipeptide or tripeptide.. Functionally, catalyzes the removal of a penultimate prolyl residue from the N-termini of peptides. This chain is Probable Xaa-Pro aminopeptidase GLRG_02280, found in Colletotrichum graminicola (strain M1.001 / M2 / FGSC 10212) (Maize anthracnose fungus).